The sequence spans 256 residues: PHD finger protein ALFIN-LIKE 4 (256 aa).

Residues 149–195 form a disordered region; that stretch reads QSKTANGSSKNKSGSKPPKRPNSDSKPQKQVQAKYEEENGGRGNGGD. Positions 154–164 are enriched in low complexity; sequence NGSSKNKSGSK. A PHD-type zinc finger spans residues 200 to 252; it reads ETICGACGEAYANGEFWICCDICETWFHGKCVRITPAKAEHIKHYKCPGCSNK.

It belongs to the Alfin family. In terms of assembly, interacts with H3K4me3 and to a lesser extent with H3K4me2.

Its subcellular location is the nucleus. Histone-binding component that specifically recognizes H3 tails trimethylated on 'Lys-4' (H3K4me3), which mark transcription start sites of virtually all active genes. This Oryza sativa subsp. indica (Rice) protein is PHD finger protein ALFIN-LIKE 4.